The following is a 123-amino-acid chain: Small ribosomal subunit protein uS12cz/uS12cy (123 aa).

The protein belongs to the universal ribosomal protein uS12 family. Part of the 30S ribosomal subunit.

Its subcellular location is the plastid. It is found in the chloroplast. In terms of biological role, with S4 and S5 plays an important role in translational accuracy. Located at the interface of the 30S and 50S subunits. The sequence is that of Small ribosomal subunit protein uS12cz/uS12cy (rps12-A) from Coffea arabica (Arabian coffee).